The sequence spans 347 residues: Violet-sensitive opsin (347 aa).

The Extracellular segment spans residues 1–31 (MLEEEDFYLFKNVSNVSPFDGPQYHIAPKWA). A glycan (N-linked (GlcNAc...) asparagine) is linked at Asn-12. A helical transmembrane segment spans residues 32 to 56 (FTLQAIFMGMVFLIGTPLNFIVLLV). The Cytoplasmic portion of the chain corresponds to 57–68 (TIKYKKLRQPLN). Residues 69–94 (YILVNITVGGFLMCIFSIFPVFVSSS) form a helical membrane-spanning segment. Topologically, residues 95–108 (QGYFFFGRIACSID) are extracellular. A disulfide bond links Cys-105 and Cys-182. Residues 109 to 128 (AFVGTLTGLVTGWSLAFLAF) traverse the membrane as a helical segment. Over 129-147 (ERYIVICKPMGNFNFSSSH) the chain is Cytoplasmic. A helical membrane pass occupies residues 148 to 171 (ALAVVICTWIIGIVVSVPPFLGWS). The Extracellular portion of the chain corresponds to 172–197 (RYMPEGLQCSCGPDWYTVGTKYRSEY). The helical transmembrane segment at 198–225 (YTWFIFIFCFVIPLSLICFSYGRLLGAL) threads the bilayer. Over 226 to 247 (RAVAAQQQESASTQKAEREVSR) the chain is Cytoplasmic. The helical transmembrane segment at 248–271 (MVIFMVGSFCLCYVPYAAMAMYMV) threads the bilayer. Residues 272–279 (TNRNHGLD) are Extracellular-facing. A helical transmembrane segment spans residues 280–304 (LRLVTIPAFFSKSSCVYNPIIYSFM). Lys-291 is subject to N6-(retinylidene)lysine. The Cytoplasmic portion of the chain corresponds to 305–347 (NKQFRGCIMETVCGRPMSDDSSVSSTSQRTEVSTVSSSQVSPA). The disordered stretch occupies residues 323-347 (DDSSVSSTSQRTEVSTVSSSQVSPA).

It belongs to the G-protein coupled receptor 1 family. Opsin subfamily. In terms of processing, phosphorylated on some or all of the serine and threonine residues present in the C-terminal region. The color pigments are found in the cone photoreceptor cells.

The protein localises to the membrane. Visual pigments are the light-absorbing molecules that mediate vision. They consist of an apoprotein, opsin, covalently linked to cis-retinal. The polypeptide is Violet-sensitive opsin (Xenopus laevis (African clawed frog)).